Here is a 400-residue protein sequence, read N- to C-terminus: Dual specificity mitogen-activated protein kinase kinase 2 (400 aa).

The residue at position 1 (M1) is an N-acetylmethionine. The residue at position 23 (S23) is a Phosphoserine. One can recognise a Protein kinase domain in the interval 72-369 (FERISELGAG…LKLLTNHAFI (298 aa)). Residues 78 to 86 (LGAGNGGVV) and K101 each bind ATP. The Proton acceptor role is filled by D194. S222 and S226 each carry phosphoserine; by RAF. The disordered stretch occupies residues 282-310 (PVVDGADGEPHSVSPRPRPPGRPISGHGM). Phosphoserine is present on residues S293, S295, and S306. Phosphothreonine is present on residues T394 and T396.

The protein belongs to the protein kinase superfamily. STE Ser/Thr protein kinase family. MAP kinase kinase subfamily. In terms of assembly, interacts with MORG1. Interacts with SGK1. Interacts with KSR1. Interacts with KSR1 and BRAF; the interaction with KSR1 mediates KSR1-BRAF dimerization. Interacts with GLS. The cofactor is Mg(2+). In terms of processing, MAPKK is itself dependent on Ser/Thr phosphorylation for activity catalyzed by MAP kinase kinase kinases (RAF or MEKK1). Phosphorylated by MAP2K1/MEK1. Expressed abundantly in the adult brain and muscle.

Its subcellular location is the cytoplasm. The protein localises to the membrane. The enzyme catalyses L-seryl-[protein] + ATP = O-phospho-L-seryl-[protein] + ADP + H(+). It catalyses the reaction L-threonyl-[protein] + ATP = O-phospho-L-threonyl-[protein] + ADP + H(+). It carries out the reaction L-tyrosyl-[protein] + ATP = O-phospho-L-tyrosyl-[protein] + ADP + H(+). Its function is as follows. Catalyzes the concomitant phosphorylation of a threonine and a tyrosine residue in a Thr-Glu-Tyr sequence located in MAP kinases. Activates the ERK1 and ERK2 MAP kinases. Activates BRAF in a KSR1 or KSR2-dependent manner; by binding to KSR1 or KSR2 releases the inhibitory intramolecular interaction between KSR1 or KSR2 protein kinase and N-terminal domains which promotes KSR1 or KSR2-BRAF dimerization and BRAF activation. The chain is Dual specificity mitogen-activated protein kinase kinase 2 (Map2k2) from Rattus norvegicus (Rat).